Consider the following 413-residue polypeptide: Tyrosine--tRNA ligase (413 aa).

Y34 is a binding site for L-tyrosine. The 'HIGH' region signature appears at 39 to 48; sequence CTAQSLHVGN. The L-tyrosine site is built by Y171 and Q175. A 'KMSKS' region motif is present at residues 231–235; sequence KMGKT. K234 is an ATP binding site. Positions 346-411 constitute an S4 RNA-binding domain; the sequence is IPITELLVTI…GKKCHILVKI (66 aa).

Belongs to the class-I aminoacyl-tRNA synthetase family. TyrS type 1 subfamily. As to quaternary structure, homodimer.

The protein resides in the cytoplasm. It carries out the reaction tRNA(Tyr) + L-tyrosine + ATP = L-tyrosyl-tRNA(Tyr) + AMP + diphosphate + H(+). Catalyzes the attachment of tyrosine to tRNA(Tyr) in a two-step reaction: tyrosine is first activated by ATP to form Tyr-AMP and then transferred to the acceptor end of tRNA(Tyr). The polypeptide is Tyrosine--tRNA ligase (Orientia tsutsugamushi (strain Ikeda) (Rickettsia tsutsugamushi)).